Consider the following 352-residue polypeptide: Probable cytosolic iron-sulfur protein assembly protein CIAO1 homolog (352 aa).

WD repeat units follow at residues 14 to 53 (GHDD…PSEQ), 63 to 102 (CHTR…WEQV), 107 to 146 (GHEN…EFEC), 152 to 191 (GHSQ…WGCA), 200 to 240 (GHES…TSTP), 268 to 306 (HHRR…LTQP), and 319 to 352 (AHGA…WWLR).

It belongs to the WD repeat CIA1 family.

Its function is as follows. Essential component of the cytosolic iron-sulfur (Fe/S) protein assembly machinery. Required for the maturation of extramitochondrial Fe/S proteins. The sequence is that of Probable cytosolic iron-sulfur protein assembly protein CIAO1 homolog from Chlamydomonas reinhardtii (Chlamydomonas smithii).